The following is a 365-amino-acid chain: tRNA-specific 2-thiouridylase MnmA (365 aa).

ATP is bound by residues 14 to 21 and Leu-40; that span reads AMSGGVDS. Cys-108 functions as the Nucleophile in the catalytic mechanism. Cys-108 and Cys-204 are disulfide-bonded. Gly-132 is an ATP binding site. Residues 154–156 are interaction with tRNA; sequence KDQ. The active-site Cysteine persulfide intermediate is Cys-204.

The protein belongs to the MnmA/TRMU family.

The protein resides in the cytoplasm. It catalyses the reaction S-sulfanyl-L-cysteinyl-[protein] + uridine(34) in tRNA + AH2 + ATP = 2-thiouridine(34) in tRNA + L-cysteinyl-[protein] + A + AMP + diphosphate + H(+). Its function is as follows. Catalyzes the 2-thiolation of uridine at the wobble position (U34) of tRNA, leading to the formation of s(2)U34. The polypeptide is tRNA-specific 2-thiouridylase MnmA (Rickettsia massiliae (strain Mtu5)).